The following is a 250-amino-acid chain: Methionine aminopeptidase (250 aa).

A substrate-binding site is contributed by H77. Positions 94, 105, and 169 each coordinate a divalent metal cation. H176 contacts substrate. The a divalent metal cation site is built by E202 and E235.

It belongs to the peptidase M24A family. Methionine aminopeptidase type 1 subfamily. In terms of assembly, monomer. Co(2+) is required as a cofactor. Requires Zn(2+) as cofactor. The cofactor is Mn(2+). Fe(2+) serves as cofactor.

It catalyses the reaction Release of N-terminal amino acids, preferentially methionine, from peptides and arylamides.. In terms of biological role, removes the N-terminal methionine from nascent proteins. The N-terminal methionine is often cleaved when the second residue in the primary sequence is small and uncharged (Met-Ala-, Cys, Gly, Pro, Ser, Thr, or Val). Requires deformylation of the N(alpha)-formylated initiator methionine before it can be hydrolyzed. In Mycoplasmoides gallisepticum (strain R(low / passage 15 / clone 2)) (Mycoplasma gallisepticum), this protein is Methionine aminopeptidase.